The sequence spans 390 residues: UPF0229 protein ABC1477 (390 aa).

Disordered stretches follow at residues 1-31 (MEKD…RHQE) and 81-118 (VGQG…QAGE). A compositionally biased stretch (polar residues) spans 7 to 16 (RQFTISQENW). Composition is skewed to basic and acidic residues over residues 22–31 (GFQDQRRHQE) and 86–100 (GDSK…DPNG).

It belongs to the UPF0229 family.

The protein is UPF0229 protein ABC1477 of Shouchella clausii (strain KSM-K16) (Alkalihalobacillus clausii).